Consider the following 951-residue polypeptide: WD repeat-containing and planar cell polarity effector protein fritz (951 aa).

2 WD repeats span residues 304–343 (PMGA…TKYA) and 345–384 (QIEI…IGHQ). Composition is skewed to polar residues over residues 709-720 (TLKSNSSLQQAP), 757-771 (IPDQ…STMP), and 818-828 (SILSNPANPAP). Disordered regions lie at residues 709-776 (TLKS…SPPP), 816-883 (TASI…AARH), and 903-951 (EYLK…FGVV). Residues 930–942 (SSKGGNSSSSSSS) are compositionally biased toward low complexity.

It belongs to the WD repeat fritz family.

The protein resides in the cell membrane. Its subcellular location is the cytoplasm. It localises to the cytoskeleton. It is found in the cilium axoneme. Its function is as follows. Probable effector of the planar cell polarity signaling pathway which regulates the septin cytoskeleton in both ciliogenesis and collective cell movements. Functions cell autonomously to regulate wing cell hair polarity and number. In Drosophila melanogaster (Fruit fly), this protein is WD repeat-containing and planar cell polarity effector protein fritz (frtz).